Reading from the N-terminus, the 383-residue chain is MEFIGILCLILVATTIGSHISRRFGIPAVIGQLLVGVLLGQAGLGWVHPNILVHDFSEIGVILLMFLAGLESDLSLLKKYFKPGMFVALLGILFPVFFGWLTGEAFQVANNEAIFFGIILAATSVSISVEVLKELNVVNTKEGSTILGASVVDDILVVLVLSFSLSFLTGKSTSNLPLPLLLLEQLFYFLFIFLLVKWIAPFLMSLAEKIYANSAIIIMSLVICLGMSYLADLIGLSSVIGAFFAGIAVSQTKVKHEVYNNVEALGYAVFIPVFFVSVGLEVDFSKFSEQILFILILTLVAILTKLIGGYIGAKFSSFSSNSALMVGAGMISRGEMALIILQIGQQSNLIENHYYSPLVIVVLLSTLISPLILKYFTKKVYAN.

Helical transmembrane passes span 1 to 21 (MEFI…SHIS), 24 to 44 (FGIP…QAGL), 51 to 71 (ILVH…AGLE), 83 to 103 (PGMF…WLTG), 112 to 132 (EAIF…VEVL), 145 to 165 (TILG…SFSL), 186 to 206 (LFYF…LMSL), 216 to 236 (IIIM…LIGL), 262 to 282 (VEAL…GLEV), 291 to 311 (ILFI…GGYI), 323 to 343 (ALMV…ILQI), and 353 to 373 (HYYS…PLIL).

This sequence belongs to the monovalent cation:proton antiporter 2 (CPA2) transporter (TC 2.A.37) family.

The protein localises to the cell membrane. Functionally, na(+)/H(+) antiporter that extrudes sodium in exchange for external protons. Can also transport lithium. The protein is Na(+)/H(+) antiporter (napA) of Enterococcus hirae.